The sequence spans 429 residues: Adenylosuccinate synthetase (429 aa).

Residues 13–19 (GDEGKGK) and 41–43 (GHT) contribute to the GTP site. Asp14 serves as the catalytic Proton acceptor. Positions 14 and 41 each coordinate Mg(2+). IMP is bound by residues 14 to 17 (DEGK), 39 to 42 (NAGH), Thr130, Arg144, Gln224, Thr239, and Arg303. His42 serves as the catalytic Proton donor. 299–305 (ATTGRAR) contacts substrate. GTP contacts are provided by residues Arg305, 331–333 (KLD), and 412–414 (STG).

It belongs to the adenylosuccinate synthetase family. Homodimer. It depends on Mg(2+) as a cofactor.

The protein localises to the cytoplasm. It carries out the reaction IMP + L-aspartate + GTP = N(6)-(1,2-dicarboxyethyl)-AMP + GDP + phosphate + 2 H(+). It functions in the pathway purine metabolism; AMP biosynthesis via de novo pathway; AMP from IMP: step 1/2. In terms of biological role, plays an important role in the de novo pathway of purine nucleotide biosynthesis. Catalyzes the first committed step in the biosynthesis of AMP from IMP. The protein is Adenylosuccinate synthetase of Psychrobacter arcticus (strain DSM 17307 / VKM B-2377 / 273-4).